Reading from the N-terminus, the 843-residue chain is Protein P (843 aa).

Residues 1 to 177 (MPLSYQHFRK…FCGSPYSWEQ (177 aa)) are terminal protein domain (TP). The interval 178–346 (DLQHGRLVFQ…YCLSHIVNLI (169 aa)) is spacer. 2 disordered regions span residues 219-249 (RKSR…RIHP) and 290-316 (STSK…RSQS). Positions 290–299 (STSKGHSSSG) are enriched in polar residues. Residues 347 to 690 (EDWGPCAEHG…YMTLYPVARQ (344 aa)) are polymerase/reverse transcriptase domain (RT). The region spanning 357–600 (EHRIRTPRTP…YSLNFMGYVI (244 aa)) is the Reverse transcriptase domain. 3 residues coordinate Mg(2+): D429, D551, and D552.

Belongs to the hepadnaviridae P protein family.

It carries out the reaction DNA(n) + a 2'-deoxyribonucleoside 5'-triphosphate = DNA(n+1) + diphosphate. It catalyses the reaction Endonucleolytic cleavage to 5'-phosphomonoester.. Activated by host HSP70 and HSP40 in vitro to be able to bind the epsilon loop of the pgRNA. Because deletion of the RNase H region renders the protein partly chaperone-independent, the chaperones may be needed indirectly to relieve occlusion of the RNA-binding site by this domain. Inhibited by several reverse-transcriptase inhibitors: Lamivudine, Adefovir and Entecavir. In terms of biological role, multifunctional enzyme that converts the viral RNA genome into dsDNA in viral cytoplasmic capsids. This enzyme displays a DNA polymerase activity that can copy either DNA or RNA templates, and a ribonuclease H (RNase H) activity that cleaves the RNA strand of RNA-DNA heteroduplexes in a partially processive 3'- to 5'-endonucleasic mode. Neo-synthesized pregenomic RNA (pgRNA) are encapsidated together with the P protein, and reverse-transcribed inside the nucleocapsid. Initiation of reverse-transcription occurs first by binding the epsilon loop on the pgRNA genome, and is initiated by protein priming, thereby the 5'-end of (-)DNA is covalently linked to P protein. Partial (+)DNA is synthesized from the (-)DNA template and generates the relaxed circular DNA (RC-DNA) genome. After budding and infection, the RC-DNA migrates in the nucleus, and is converted into a plasmid-like covalently closed circular DNA (cccDNA). The activity of P protein does not seem to be necessary for cccDNA generation, and is presumably released from (+)DNA by host nuclear DNA repair machinery. The polypeptide is Protein P (Homo sapiens (Human)).